Here is a 571-residue protein sequence, read N- to C-terminus: Cerebral cavernous malformations 2 protein-like (571 aa).

Disordered stretches follow at residues 164–193 (AGVD…GTAE), 212–295 (AEAR…PQDP), and 544–571 (LAPD…DNYL). Positions 184-193 (PEKRRVGTAE) are enriched in basic and acidic residues. Over residues 212-223 (AEARAGGGGGGS) the composition is skewed to gly residues. Positions 237-251 (WERRQTFSGSWERRH) are enriched in basic and acidic residues. A compositionally biased stretch (gly residues) spans 253–264 (GGGGGGGAGKPG). A compositionally biased stretch (pro residues) spans 286–295 (GPNPLDPQDP). Positions 545–555 (APDDDDDDEDE) are enriched in acidic residues.

The protein belongs to the CCM2 family.

This Homo sapiens (Human) protein is Cerebral cavernous malformations 2 protein-like (CCM2L).